Reading from the N-terminus, the 359-residue chain is Alanine racemase (359 aa).

K34 acts as the Proton acceptor; specific for D-alanine in catalysis. Position 34 is an N6-(pyridoxal phosphate)lysine (K34). Substrate is bound at residue R129. The active-site Proton acceptor; specific for L-alanine is the Y254. Substrate is bound at residue M302.

It belongs to the alanine racemase family. Pyridoxal 5'-phosphate is required as a cofactor.

It carries out the reaction L-alanine = D-alanine. It functions in the pathway amino-acid biosynthesis; D-alanine biosynthesis; D-alanine from L-alanine: step 1/1. Its function is as follows. Catalyzes the interconversion of L-alanine and D-alanine. May also act on other amino acids. The chain is Alanine racemase (alr) from Yersinia pestis.